We begin with the raw amino-acid sequence, 476 residues long: Aspartyl/glutamyl-tRNA(Asn/Gln) amidotransferase subunit B (476 aa).

This sequence belongs to the GatB/GatE family. GatB subfamily. In terms of assembly, heterotrimer of A, B and C subunits.

The catalysed reaction is L-glutamyl-tRNA(Gln) + L-glutamine + ATP + H2O = L-glutaminyl-tRNA(Gln) + L-glutamate + ADP + phosphate + H(+). It carries out the reaction L-aspartyl-tRNA(Asn) + L-glutamine + ATP + H2O = L-asparaginyl-tRNA(Asn) + L-glutamate + ADP + phosphate + 2 H(+). Functionally, allows the formation of correctly charged Asn-tRNA(Asn) or Gln-tRNA(Gln) through the transamidation of misacylated Asp-tRNA(Asn) or Glu-tRNA(Gln) in organisms which lack either or both of asparaginyl-tRNA or glutaminyl-tRNA synthetases. The reaction takes place in the presence of glutamine and ATP through an activated phospho-Asp-tRNA(Asn) or phospho-Glu-tRNA(Gln). In Neisseria meningitidis serogroup C (strain 053442), this protein is Aspartyl/glutamyl-tRNA(Asn/Gln) amidotransferase subunit B.